The primary structure comprises 178 residues: Transmembrane protein 196 (178 aa).

Helical transmembrane passes span 11 to 31, 47 to 67, 73 to 93, and 106 to 126; these read LLVL…VGAV, SSPV…ILCA, LVMI…ILNF, and LYPL…GCTL.

Expression is significantly decreased in lung cancer cells compared to normal lung tissue (at protein level).

Its subcellular location is the cytoplasm. The protein localises to the membrane. Its function is as follows. Acts as a tumor suppressor in lung cancer. Inhibits tumor cell growth by inhibiting cell proliferation and migration and promoting cell apoptosis. Inhibits metastasis of lung cancer by suppressing beta-catenin expression in the Wnt/beta-catenin signaling pathway. The sequence is that of Transmembrane protein 196 (TMEM196) from Homo sapiens (Human).